A 710-amino-acid polypeptide reads, in one-letter code: mRNA export factor crp79 (710 aa).

RRM domains lie at 19 to 102 and 222 to 292; these read IYVG…KLTI and HFKQ…PTTP. The segment covering 333–348 has biased composition (polar residues); the sequence is QWGSVSTTGVSNQQNH. Residues 333–357 are disordered; sequence QWGSVSTTGVSNQQNHPAAWNPDNK. Residues 401 to 474 form the RRM 3 domain; it reads EDLFSPFGSI…DRIRRLQAFF (74 aa). Residues 502 to 524 show a composition bias toward polar residues; sequence TIRKPIESSTNKISENPTTLSSK. Residues 502–544 are disordered; sequence TIRKPIESSTNKISENPTTLSSKVENKNEPKTGENKEPSQTNE. Residues 525-538 show a composition bias toward basic and acidic residues; that stretch reads VENKNEPKTGENKE.

It localises to the cytoplasm. The protein localises to the nucleus. In terms of biological role, binds the poly(A) tail of mRNA. Involved in the export of mRNA from the nucleus to the cytoplasm. The polypeptide is mRNA export factor crp79 (crp79) (Schizosaccharomyces pombe (strain 972 / ATCC 24843) (Fission yeast)).